Here is a 91-residue protein sequence, read N- to C-terminus: Small ribosomal subunit protein uS15 (91 aa).

This sequence belongs to the universal ribosomal protein uS15 family. As to quaternary structure, part of the 30S ribosomal subunit. Forms a bridge to the 50S subunit in the 70S ribosome, contacting the 23S rRNA.

One of the primary rRNA binding proteins, it binds directly to 16S rRNA where it helps nucleate assembly of the platform of the 30S subunit by binding and bridging several RNA helices of the 16S rRNA. Functionally, forms an intersubunit bridge (bridge B4) with the 23S rRNA of the 50S subunit in the ribosome. This Deinococcus radiodurans (strain ATCC 13939 / DSM 20539 / JCM 16871 / CCUG 27074 / LMG 4051 / NBRC 15346 / NCIMB 9279 / VKM B-1422 / R1) protein is Small ribosomal subunit protein uS15.